Consider the following 212-residue polypeptide: MTSSTTTAVPGLLLAGGLARRMGGGDKPMRVIAGRTLLAHVITRLAPQCEPLVLNANGDPARFAAYGLTVVPDDVPGFAGPLAGILAGLDWVASHRPAAQRMISVAADCPFLPRDLVARLTAACMAEDTDLALAASGGHTHPVIGLWPVRLREDLRHALVSEDIRKVTRFTARYKVATVTWPVVPRDPFFNANTAEDLAEAERLAAMEDRDA.

GTP-binding positions include 14-16 (LAG), lysine 27, asparagine 55, aspartate 73, and aspartate 108. Aspartate 108 contacts Mg(2+).

The protein belongs to the MobA family. As to quaternary structure, monomer. Requires Mg(2+) as cofactor.

The protein resides in the cytoplasm. It carries out the reaction Mo-molybdopterin + GTP + H(+) = Mo-molybdopterin guanine dinucleotide + diphosphate. Transfers a GMP moiety from GTP to Mo-molybdopterin (Mo-MPT) cofactor (Moco or molybdenum cofactor) to form Mo-molybdopterin guanine dinucleotide (Mo-MGD) cofactor. The sequence is that of Molybdenum cofactor guanylyltransferase from Bradyrhizobium sp. (strain ORS 278).